The chain runs to 361 residues: MSDAIRPQPGILDIALYEGGKSHVAGIQNALKLSSNENPFGPSPKAKEAFLRSVHTLHRYPSTDHAGLRHAIAEVHGLDPARVICGVGSDEIITFLCQAYAGPHTDVVFTEHGFLMYRISALAVGANPVEVPERERTTDVDAILAACTPHTRLVFLANPNNPTGTMIGQADLARLAAGLPAQAILVLDGAYAEYVPGYDAGRALIEERGNVVMTRTFSKIYGLGGLRVGWGYGPKAIIDVLNRIRGPFNLSTTQLETAEAAVRDQDHVARCRADNARWRIWLAEALAEIGVPSDTSMANFILARFSDTEEAEACDLHLQTQGLIVRRVAGYKLPHCLRITIGDEASCRRVAHAIGQFKRMR.

Lys219 carries the post-translational modification N6-(pyridoxal phosphate)lysine.

It belongs to the class-II pyridoxal-phosphate-dependent aminotransferase family. Histidinol-phosphate aminotransferase subfamily. As to quaternary structure, homodimer. Pyridoxal 5'-phosphate serves as cofactor.

It carries out the reaction L-histidinol phosphate + 2-oxoglutarate = 3-(imidazol-4-yl)-2-oxopropyl phosphate + L-glutamate. Its pathway is amino-acid biosynthesis; L-histidine biosynthesis; L-histidine from 5-phospho-alpha-D-ribose 1-diphosphate: step 7/9. This chain is Histidinol-phosphate aminotransferase, found in Cereibacter sphaeroides (strain ATCC 17029 / ATH 2.4.9) (Rhodobacter sphaeroides).